The following is a 1224-amino-acid chain: Tyrosine-protein kinase abl-1 (1224 aa).

An SH3 domain is found at 115 to 188 (SSAPLFVALY…PSNFIAPYNS (74 aa)). The SH2 domain maps to 194–284 (WYHGKISRSD…GLICLLMYPA (91 aa)). A Protein kinase domain is found at 311–562 (IIMHNKLGGG…PRFRDIHFNL (252 aa)). Residues 317–325 (LGGGQYGDV), Lys-340, and 385–391 (EFMCNGN) each bind ATP. Asp-432 serves as the catalytic Proton acceptor. The Kinase activation loop signature appears at 450–474 (DFGLARFMKEDTYTAHAGAKFPIKW). Basic and acidic residues predominate over residues 579–620 (LKKNNDKKLESDKRRSNVRERSDSKSRHSSHHDRDRDRESLH). 5 disordered regions span residues 579–671 (LKKN…NTKP), 736–775 (KEST…STYV), 796–881 (KRSE…DVGM), 914–937 (LRHV…ATDN), and 968–1016 (RPFS…RSNG). Polar residues-rich tracts occupy residues 639–655 (SVSF…TSFR) and 746–760 (AGSS…NDSL). Basic and acidic residues-rich tracts occupy residues 797–819 (RSET…KSEK) and 864–877 (PDSK…ETTK). Residues 973–984 (QCPNNSTSSAIS) show a composition bias toward polar residues. Basic and acidic residues predominate over residues 1001 to 1016 (YEERMKPELPRKRSNG).

Belongs to the protein kinase superfamily. Tyr protein kinase family. ABL subfamily. As to quaternary structure, interacts (via SH2 and SH3 domains) with mig-13; the interaction is direct. May interact with soem-1.

The protein resides in the cell membrane. Its subcellular location is the cytoplasm. It carries out the reaction L-tyrosyl-[protein] + ATP = O-phospho-L-tyrosyl-[protein] + ADP + H(+). Functions downstream of migratory protein mig-13 and is involved in Q neuroblast migration during larval development. Recruited by mig-13 to the leading edge of Q neuroblasts and their descendents to signal downstream, likely to the wve-1 pathway, and direct migration along the anteroposterior body axis. Promotes germline cell apoptosis in response to oxidative, osmotic and heat shock stresses. This Caenorhabditis elegans protein is Tyrosine-protein kinase abl-1 (abl-1).